The primary structure comprises 764 residues: Probable 5-methyltetrahydropteroyltriglutamate--homocysteine methyltransferase (764 aa).

5-methyltetrahydropteroyltri-L-glutamate contacts are provided by Lys19 and Asn126. Ser182 carries the phosphoserine modification. Phosphothreonine is present on Thr441. Residues 442 to 444 (IGS) and Glu495 each bind L-homocysteine. L-methionine is bound by residues 442-444 (IGS) and Glu495. 5-methyltetrahydropteroyltri-L-glutamate is bound by residues Asp500, Tyr523, 526–527 (RC), and Trp572. Asp610 is an L-homocysteine binding site. Asp610 is a binding site for L-methionine. Zn(2+) is bound by residues His652, Cys654, and Glu676. His703 acts as the Proton donor in catalysis. Cys735 lines the Zn(2+) pocket.

The protein belongs to the vitamin-B12 independent methionine synthase family. The cofactor is Zn(2+).

The protein resides in the nucleus. The protein localises to the cytoplasm. The catalysed reaction is 5-methyltetrahydropteroyltri-L-glutamate + L-homocysteine = tetrahydropteroyltri-L-glutamate + L-methionine. It participates in amino-acid biosynthesis; L-methionine biosynthesis via de novo pathway; L-methionine from L-homocysteine (MetE route): step 1/1. Functionally, catalyzes the transfer of a methyl group from 5-methyltetrahydrofolate to homocysteine resulting in methionine formation. This is Probable 5-methyltetrahydropteroyltriglutamate--homocysteine methyltransferase (met26) from Schizosaccharomyces pombe (strain 972 / ATCC 24843) (Fission yeast).